The sequence spans 332 residues: 4-hydroxythreonine-4-phosphate dehydrogenase (332 aa).

Substrate contacts are provided by H138 and T139. 3 residues coordinate a divalent metal cation: H168, H213, and H269. The substrate site is built by K277, N286, and R295.

This sequence belongs to the PdxA family. Homodimer. Zn(2+) serves as cofactor. It depends on Mg(2+) as a cofactor. Requires Co(2+) as cofactor.

The protein resides in the cytoplasm. It catalyses the reaction 4-(phosphooxy)-L-threonine + NAD(+) = 3-amino-2-oxopropyl phosphate + CO2 + NADH. It participates in cofactor biosynthesis; pyridoxine 5'-phosphate biosynthesis; pyridoxine 5'-phosphate from D-erythrose 4-phosphate: step 4/5. Its function is as follows. Catalyzes the NAD(P)-dependent oxidation of 4-(phosphooxy)-L-threonine (HTP) into 2-amino-3-oxo-4-(phosphooxy)butyric acid which spontaneously decarboxylates to form 3-amino-2-oxopropyl phosphate (AHAP). The chain is 4-hydroxythreonine-4-phosphate dehydrogenase from Vibrio parahaemolyticus serotype O3:K6 (strain RIMD 2210633).